The primary structure comprises 62 residues: Dual specificity mitogen-activated protein kinase kinase 3 (62 aa).

The region spanning 1-62 (GKIAVSIVKA…VAKTMDAGCK (62 aa)) is the Protein kinase domain.

It belongs to the protein kinase superfamily. STE Ser/Thr protein kinase family. MAP kinase kinase subfamily. Activated by phosphorylation on Ser/Thr catalyzed by MAP kinase kinase kinases.

The enzyme catalyses L-seryl-[protein] + ATP = O-phospho-L-seryl-[protein] + ADP + H(+). It catalyses the reaction L-threonyl-[protein] + ATP = O-phospho-L-threonyl-[protein] + ADP + H(+). It carries out the reaction L-tyrosyl-[protein] + ATP = O-phospho-L-tyrosyl-[protein] + ADP + H(+). Its function is as follows. Catalyzes the concomitant phosphorylation of a threonine and a tyrosine residue in a Thr-Glu-Tyr sequence located in MAP kinases. The protein is Dual specificity mitogen-activated protein kinase kinase 3 (map2k3) of Xenopus laevis (African clawed frog).